The following is a 291-amino-acid chain: tRNA-cytidine(32) 2-sulfurtransferase (291 aa).

Positions 36 to 41 (SGGKDS) match the PP-loop motif motif. Residues C111, C114, and C202 each coordinate [4Fe-4S] cluster. Residues 258 to 291 (RDPWLDAEDEEAEDCGEPPAGDGVVSLGGARGGR) form a disordered region. Acidic residues predominate over residues 262–273 (LDAEDEEAEDCG).

This sequence belongs to the TtcA family. Homodimer. Requires Mg(2+) as cofactor. [4Fe-4S] cluster serves as cofactor.

It localises to the cytoplasm. The catalysed reaction is cytidine(32) in tRNA + S-sulfanyl-L-cysteinyl-[cysteine desulfurase] + AH2 + ATP = 2-thiocytidine(32) in tRNA + L-cysteinyl-[cysteine desulfurase] + A + AMP + diphosphate + H(+). It functions in the pathway tRNA modification. Its function is as follows. Catalyzes the ATP-dependent 2-thiolation of cytidine in position 32 of tRNA, to form 2-thiocytidine (s(2)C32). The sulfur atoms are provided by the cysteine/cysteine desulfurase (IscS) system. The protein is tRNA-cytidine(32) 2-sulfurtransferase of Anaeromyxobacter dehalogenans (strain 2CP-1 / ATCC BAA-258).